The following is a 274-amino-acid chain: 2,3,4,5-tetrahydropyridine-2,6-dicarboxylate N-succinyltransferase (274 aa).

Positions 104 and 141 each coordinate substrate.

It belongs to the transferase hexapeptide repeat family. As to quaternary structure, homotrimer.

It is found in the cytoplasm. The catalysed reaction is (S)-2,3,4,5-tetrahydrodipicolinate + succinyl-CoA + H2O = (S)-2-succinylamino-6-oxoheptanedioate + CoA. It participates in amino-acid biosynthesis; L-lysine biosynthesis via DAP pathway; LL-2,6-diaminopimelate from (S)-tetrahydrodipicolinate (succinylase route): step 1/3. The polypeptide is 2,3,4,5-tetrahydropyridine-2,6-dicarboxylate N-succinyltransferase (Shigella dysenteriae serotype 1 (strain Sd197)).